A 72-amino-acid polypeptide reads, in one-letter code: MAFLKKSLLLVLFLGLVSLSICDEEKRENEDEEEQEDDEQSEEKRGMWGTVFKGIKTVAKHLLPHVFSSQQS.

A signal peptide spans 1–22 (MAFLKKSLLLVLFLGLVSLSIC). Residues 23–43 (DEEKRENEDEEEQEDDEQSEE) constitute a propeptide that is removed on maturation. Residues 24-46 (EEKRENEDEEEQEDDEQSEEKRG) are disordered. Acidic residues predominate over residues 30-41 (EDEEEQEDDEQS).

As to expression, expressed by the skin glands.

It localises to the secreted. Has antibacterial activity against Gram-positive bacterium M.luteus NCT C2665 and against Gram-negative bacterium E.coli K12D31. The polypeptide is Caerin-regulated peptide (Agalychnis callidryas (Red-eyed tree frog)).